Here is a 268-residue protein sequence, read N- to C-terminus: Type III pantothenate kinase (268 aa).

18–25 contacts ATP; it reads DIGNTTTT. Residues tyrosine 108 and 115-118 contribute to the substrate site; that span reads GADR. Aspartate 117 acts as the Proton acceptor in catalysis. A K(+)-binding site is contributed by aspartate 138. Threonine 141 contacts ATP. Threonine 193 contributes to the substrate binding site.

This sequence belongs to the type III pantothenate kinase family. In terms of assembly, homodimer. NH4(+) is required as a cofactor. It depends on K(+) as a cofactor.

The protein resides in the cytoplasm. The enzyme catalyses (R)-pantothenate + ATP = (R)-4'-phosphopantothenate + ADP + H(+). The protein operates within cofactor biosynthesis; coenzyme A biosynthesis; CoA from (R)-pantothenate: step 1/5. Functionally, catalyzes the phosphorylation of pantothenate (Pan), the first step in CoA biosynthesis. This is Type III pantothenate kinase from Chlorobaculum parvum (strain DSM 263 / NCIMB 8327) (Chlorobium vibrioforme subsp. thiosulfatophilum).